The following is a 323-amino-acid chain: Acetyl-coenzyme A carboxylase carboxyl transferase subunit alpha (323 aa).

Positions 40-293 (LAEKSLQLTK…RKALAESLKT (254 aa)) constitute a CoA carboxyltransferase C-terminal domain.

The protein belongs to the AccA family. As to quaternary structure, acetyl-CoA carboxylase is a heterohexamer composed of biotin carboxyl carrier protein (AccB), biotin carboxylase (AccC) and two subunits each of ACCase subunit alpha (AccA) and ACCase subunit beta (AccD).

The protein localises to the cytoplasm. It carries out the reaction N(6)-carboxybiotinyl-L-lysyl-[protein] + acetyl-CoA = N(6)-biotinyl-L-lysyl-[protein] + malonyl-CoA. It participates in lipid metabolism; malonyl-CoA biosynthesis; malonyl-CoA from acetyl-CoA: step 1/1. Functionally, component of the acetyl coenzyme A carboxylase (ACC) complex. First, biotin carboxylase catalyzes the carboxylation of biotin on its carrier protein (BCCP) and then the CO(2) group is transferred by the carboxyltransferase to acetyl-CoA to form malonyl-CoA. This Polynucleobacter necessarius subsp. necessarius (strain STIR1) protein is Acetyl-coenzyme A carboxylase carboxyl transferase subunit alpha.